Consider the following 200-residue polypeptide: LHFPL tetraspan subfamily member 6 protein (200 aa).

Residues 1-23 form the signal peptide; that stretch reads MASSLTCTGVIWALLSFLSAATS. The next 3 helical transmembrane spans lie at 84 to 104, 123 to 143, and 166 to 186; these read ICTI…LTAL, GIQF…PLGW, and IGWA…LCTW.

The protein belongs to the LHFP family.

It is found in the membrane. This chain is LHFPL tetraspan subfamily member 6 protein, found in Mus musculus (Mouse).